We begin with the raw amino-acid sequence, 95 residues long: Small ribosomal subunit protein bS6 (95 aa).

It belongs to the bacterial ribosomal protein bS6 family.

Functionally, binds together with bS18 to 16S ribosomal RNA. This is Small ribosomal subunit protein bS6 from Bacillus velezensis (strain DSM 23117 / BGSC 10A6 / LMG 26770 / FZB42) (Bacillus amyloliquefaciens subsp. plantarum).